We begin with the raw amino-acid sequence, 41 residues long: Photosystem I reaction center subunit IX (41 aa).

Residues 7–27 (YLSTAPVLLTLWMTFTAGFII) form a helical membrane-spanning segment.

It belongs to the PsaJ family.

It localises to the plastid. The protein localises to the chloroplast thylakoid membrane. In terms of biological role, may help in the organization of the PsaE and PsaF subunits. The sequence is that of Photosystem I reaction center subunit IX from Thalassiosira pseudonana (Marine diatom).